Here is a 437-residue protein sequence, read N- to C-terminus: Enolase (437 aa).

Position 162 (Q162) interacts with (2R)-2-phosphoglycerate. The Proton donor role is filled by E204. Residues D251, E297, and D324 each contribute to the Mg(2+) site. (2R)-2-phosphoglycerate-binding residues include K349, R378, S379, and K400. The active-site Proton acceptor is K349.

Belongs to the enolase family. Mg(2+) is required as a cofactor.

Its subcellular location is the cytoplasm. It is found in the secreted. The protein localises to the cell surface. The catalysed reaction is (2R)-2-phosphoglycerate = phosphoenolpyruvate + H2O. It participates in carbohydrate degradation; glycolysis; pyruvate from D-glyceraldehyde 3-phosphate: step 4/5. Catalyzes the reversible conversion of 2-phosphoglycerate (2-PG) into phosphoenolpyruvate (PEP). It is essential for the degradation of carbohydrates via glycolysis. The protein is Enolase of Chlorobium luteolum (strain DSM 273 / BCRC 81028 / 2530) (Pelodictyon luteolum).